A 564-amino-acid chain; its full sequence is Pachytene checkpoint protein 2 (564 aa).

314 to 321 (GPPGTGKT) provides a ligand contact to ATP.

It belongs to the AAA ATPase family. PCH2 subfamily.

It is found in the nucleus. It localises to the nucleolus. Its subcellular location is the chromosome. Functionally, required for the pachytene checkpoint, the meiotic checkpoint that prevents chromosome segregation when defects in recombination and synaptonemal complex formation occurred. Represses meiotic recombination in the rDNA, probably by excluding the meiosis-specific protein HOP1 from the nucleolar region. The sequence is that of Pachytene checkpoint protein 2 (PCH2) from Saccharomyces cerevisiae (strain ATCC 204508 / S288c) (Baker's yeast).